Reading from the N-terminus, the 299-residue chain is Regucalcin (299 aa).

E18 serves as a coordination point for a divalent metal cation. The substrate site is built by R101, N103, and E121. Residue K144 is modified to N6-succinyllysine. Residues N154 and D204 each contribute to the a divalent metal cation site. D204 acts as the Proton donor/acceptor in catalysis. N6-succinyllysine occurs at positions 244 and 253.

It belongs to the SMP-30/CGR1 family. In terms of assembly, monomer. The cofactor is Zn(2+). Mn(2+) serves as cofactor. Requires Ca(2+) as cofactor. It depends on Mg(2+) as a cofactor.

The protein resides in the cytoplasm. The enzyme catalyses D-glucono-1,5-lactone + H2O = D-gluconate + H(+). Functionally, gluconolactonase with low activity towards other sugar lactones, including gulonolactone and galactonolactone. Can also hydrolyze diisopropyl phosphorofluoridate and phenylacetate (in vitro). Calcium-binding protein. Modulates Ca(2+) signaling, and Ca(2+)-dependent cellular processes and enzyme activities. This Homo sapiens (Human) protein is Regucalcin (RGN).